Consider the following 197-residue polypeptide: Protein GrpE (197 aa).

The segment at 1–39 is disordered; that stretch reads MSSKEQKTPEGQAPEEIIMDQHEEIEAVEPEASAEQVDP.

The protein belongs to the GrpE family. In terms of assembly, homodimer.

It localises to the cytoplasm. Participates actively in the response to hyperosmotic and heat shock by preventing the aggregation of stress-denatured proteins, in association with DnaK and GrpE. It is the nucleotide exchange factor for DnaK and may function as a thermosensor. Unfolded proteins bind initially to DnaJ; upon interaction with the DnaJ-bound protein, DnaK hydrolyzes its bound ATP, resulting in the formation of a stable complex. GrpE releases ADP from DnaK; ATP binding to DnaK triggers the release of the substrate protein, thus completing the reaction cycle. Several rounds of ATP-dependent interactions between DnaJ, DnaK and GrpE are required for fully efficient folding. This chain is Protein GrpE, found in Escherichia coli O127:H6 (strain E2348/69 / EPEC).